Here is a 25-residue protein sequence, read N- to C-terminus: Cysteine-rich venom protein 25 (25 aa).

Residues 1–25 form a disordered region; the sequence is NVDFNSESTRRKKKQKEIVDLXNSL.

This sequence belongs to the CRISP family. Contains 8 disulfide bonds. Expressed by the venom gland.

The protein resides in the secreted. The polypeptide is Cysteine-rich venom protein 25 (Naja haje haje (Egyptian cobra)).